Reading from the N-terminus, the 944-residue chain is Trehalose monomycolate exporter MmpL3 (944 aa).

The Cytoplasmic segment spans residues 1–13; the sequence is MFAWWGRTVYRYR. Residues 14 to 34 traverse the membrane as a helical segment; the sequence is FIVIGVMVALCLGGGVFGLSL. At 35–185 the chain is on the periplasmic side; that stretch reads GKHVTQSGFY…TIATDQRRME (151 aa). Residue 40 to 44 coordinates a 1,2-diacylglycero-3-phosphoethanolamine; that stretch reads QSGFY. Residues 186–206 form a helical membrane-spanning segment; sequence VLALPLVAVVLFFVFGGVIAA. Residues 207 to 209 lie on the Cytoplasmic side of the membrane; sequence GLP. A helical membrane pass occupies residues 210–230; sequence VMVGGLCIAGALGIMRFLAIF. The Periplasmic segment spans residues 231 to 235; that stretch reads GPVHY. Residues 236–256 form a helical membrane-spanning segment; it reads FAQPVVSLIGLGIAIDYGLFI. Residues 257-286 are Cytoplasmic-facing; sequence VSRFREEIAEGYDTETAVRRTVITAGRTVT. Residues 287-307 form a helical membrane-spanning segment; the sequence is FSAVLIVASAIGLLLFPQGFL. The Periplasmic portion of the chain corresponds to 308–314; sequence KSLTYAT. Residues 315–335 traverse the membrane as a helical segment; that stretch reads IASVMLSAILSITVLPACLGI. Residues 336-396 are Cytoplasmic-facing; the sequence is LGKHVDALGV…KLVNRVMKRP (61 aa). A helical membrane pass occupies residues 397–417; that stretch reads VLFAAPIVIIMILLIIPVGKL. Residues 418–562 are Periplasmic-facing; sequence SLGGISEKYL…HGLFAKMPLM (145 aa). A helical transmembrane segment spans residues 563 to 583; it reads VVILLTTTIVLMFLAFGSVVL. Residues 584 to 586 are Cytoplasmic-facing; it reads PIK. A helical transmembrane segment spans residues 587 to 607; it reads ATLMSALTLGSTMGILTWIFV. The Periplasmic segment spans residues 608 to 616; it reads DGHFSKWLN. The helical transmembrane segment at 617-637 threads the bilayer; it reads FTPTPLTAPVIGLIIALVFGL. Residues 638 to 672 are Cytoplasmic-facing; it reads STDYEVFLVSRMVEARERGMSTQEAIRIGTAATGR. Residues 673 to 693 form a helical membrane-spanning segment; it reads IITAAALIVAVVAGAFVFSDL. Over 694 to 698 the chain is Periplasmic; that stretch reads VMMKY. A helical transmembrane segment spans residues 699–719; sequence LAFGLMAALLLDATVVRMFLV. Over 720–944 the chain is Cytoplasmic; sequence PSVMKLLGDD…QDLLRREGRL (225 aa). The tract at residues 778–944 is disordered; that stretch reads AAGDPRPPHD…QDLLRREGRL (167 aa). Low complexity predominate over residues 791-828; the sequence is PLAESPRPARSSPASSPELTPALEATAAPAAPSGASTT. A compositionally biased stretch (polar residues) spans 829–839; the sequence is RMQIGSSTEPP. Residues 855 to 866 are compositionally biased toward pro residues; the sequence is STPPPTPTPPSA.

The protein belongs to the resistance-nodulation-cell division (RND) (TC 2.A.6) family. MmpL subfamily. As to quaternary structure, monomer. Interacts with TtfA (via N-terminus); active trehalose monomycolate (TMM) biosynthesis is not required for the complex formation.

The protein localises to the cell inner membrane. The protein resides in the cell septum. Its subcellular location is the cell tip. Functionally, transports trehalose monomycolate (TMM) to the cell wall. Flips TMM across the inner membrane. Membrane potential is not required for this function. Transports probably phosphatidylethanolamine (PE) as well. Binds specifically both TMM and PE, but not trehalose dimycolate (TDM). Also binds diacylglycerol (DAG) and other phospholipids, including phosphatidylglycerol (PG), phosphatidylinositol (PI), and cardiolipin (CDL). Contributes to membrane potential, cell wall composition, antibiotic susceptibility and fitness. Could also be part of a heme-iron acquisition system. The polypeptide is Trehalose monomycolate exporter MmpL3 (mmpL3) (Mycobacterium tuberculosis (strain CDC 1551 / Oshkosh)).